The following is a 391-amino-acid chain: MSEDFYDVLGVSRDATEDEIMQAYRDQVSEYHPDVSDDPDAEEKFKKIQKAKDVLTDEETRQQYDQLGHERFEEAEKRGATGNGGGGAGGMGGAGGPFGGGMGGGAGGGMGDIFEQFFGGAGGGGGRGRSGPEQGRDLRTDLTVTLSEAYRGVSKQVTVRRPESCADCGGSGYPEDADVRTCPQCDGQGVVTQVRQTPLGRVQQRQECSRCGGEGELHSETCSTCGGQGQTRERATLTVDIPEGIRTGQTLRMDGEGAPGEPGAPNGDLLVDVTVEEHPDFERDGDDLHHRHAVSFPQAVFGAEIEVPTLDGAATFDLDAGTQSGETFRLKGKGMPRLRRRGNGDLYVTVQVVTPESLSDEQRDALEQFAEAGGEEIDVEQGFFEKLKNSF.

The J domain maps to 4 to 68 (DFYDVLGVSR…ETRQQYDQLG (65 aa)). The segment covering 53–79 (DVLTDEETRQQYDQLGHERFEEAEKRG) has biased composition (basic and acidic residues). Disordered stretches follow at residues 53–94 (DVLT…MGGA) and 117–136 (FFGG…EQGR). Gly residues-rich tracts occupy residues 81–94 (TGNG…MGGA) and 119–129 (GGAGGGGGRGR). The CR-type zinc-finger motif lies at 152–234 (GVSKQVTVRR…CGGQGQTRER (83 aa)). Residues Cys-165, Cys-168, Cys-182, Cys-185, Cys-208, Cys-211, Cys-222, and Cys-225 each coordinate Zn(2+). 4 CXXCXGXG motif repeats span residues 165-172 (CADCGGSG), 182-189 (CPQCDGQG), 208-215 (CSRCGGEG), and 222-229 (CSTCGGQG).

The protein belongs to the DnaJ family. Homodimer. The cofactor is Zn(2+).

The protein localises to the cytoplasm. Its function is as follows. Participates actively in the response to hyperosmotic and heat shock by preventing the aggregation of stress-denatured proteins and by disaggregating proteins, also in an autonomous, DnaK-independent fashion. Unfolded proteins bind initially to DnaJ; upon interaction with the DnaJ-bound protein, DnaK hydrolyzes its bound ATP, resulting in the formation of a stable complex. GrpE releases ADP from DnaK; ATP binding to DnaK triggers the release of the substrate protein, thus completing the reaction cycle. Several rounds of ATP-dependent interactions between DnaJ, DnaK and GrpE are required for fully efficient folding. Also involved, together with DnaK and GrpE, in the DNA replication of plasmids through activation of initiation proteins. The protein is Chaperone protein DnaJ of Halobacterium salinarum (strain ATCC 29341 / DSM 671 / R1).